A 484-amino-acid polypeptide reads, in one-letter code: ATP synthase subunit beta (484 aa).

168–175 (GGAGVGKT) is a binding site for ATP.

The protein belongs to the ATPase alpha/beta chains family. As to quaternary structure, F-type ATPases have 2 components, CF(1) - the catalytic core - and CF(0) - the membrane proton channel. CF(1) has five subunits: alpha(3), beta(3), gamma(1), delta(1), epsilon(1). CF(0) has three main subunits: a(1), b(2) and c(9-12). The alpha and beta chains form an alternating ring which encloses part of the gamma chain. CF(1) is attached to CF(0) by a central stalk formed by the gamma and epsilon chains, while a peripheral stalk is formed by the delta and b chains.

It localises to the cell membrane. It carries out the reaction ATP + H2O + 4 H(+)(in) = ADP + phosphate + 5 H(+)(out). Functionally, produces ATP from ADP in the presence of a proton gradient across the membrane. The catalytic sites are hosted primarily by the beta subunits. The polypeptide is ATP synthase subunit beta (Renibacterium salmoninarum (strain ATCC 33209 / DSM 20767 / JCM 11484 / NBRC 15589 / NCIMB 2235)).